Consider the following 228-residue polypeptide: 5'-methylthioadenosine/S-adenosylhomocysteine nucleosidase (228 aa).

The active-site Proton acceptor is the Glu11. Residues Gly77, Ile151, and 172–173 (ME) contribute to the substrate site. The active-site Proton donor is Asp196.

Belongs to the PNP/UDP phosphorylase family. MtnN subfamily.

It carries out the reaction S-adenosyl-L-homocysteine + H2O = S-(5-deoxy-D-ribos-5-yl)-L-homocysteine + adenine. The enzyme catalyses S-methyl-5'-thioadenosine + H2O = 5-(methylsulfanyl)-D-ribose + adenine. The catalysed reaction is 5'-deoxyadenosine + H2O = 5-deoxy-D-ribose + adenine. Its pathway is amino-acid biosynthesis; L-methionine biosynthesis via salvage pathway; S-methyl-5-thio-alpha-D-ribose 1-phosphate from S-methyl-5'-thioadenosine (hydrolase route): step 1/2. In terms of biological role, catalyzes the irreversible cleavage of the glycosidic bond in both 5'-methylthioadenosine (MTA) and S-adenosylhomocysteine (SAH/AdoHcy) to adenine and the corresponding thioribose, 5'-methylthioribose and S-ribosylhomocysteine, respectively. Also cleaves 5'-deoxyadenosine, a toxic by-product of radical S-adenosylmethionine (SAM) enzymes, into 5-deoxyribose and adenine. The chain is 5'-methylthioadenosine/S-adenosylhomocysteine nucleosidase from Staphylococcus epidermidis (strain ATCC 12228 / FDA PCI 1200).